Consider the following 446-residue polypeptide: Casein kinase I homolog 1 (446 aa).

A Protein kinase domain is found at 12 to 274 (YKVGRRIGEG…FDATPDYDYL (263 aa)). Residues 18–26 (IGEGSFGVI) and Lys41 contribute to the ATP site. Catalysis depends on Asp131, which acts as the Proton acceptor. Positions 308–430 (KSRNAETENQ…ETEAPKKKKS (123 aa)) are disordered. The residue at position 329 (Ser329) is a Phosphoserine. The span at 332-345 (PALQNHASTQNVVS) shows a compositional bias: polar residues. A compositionally biased stretch (basic and acidic residues) spans 346-355 (KRSDYEKPFA). Over residues 360–397 (NSASDSAEPNQNSLPNPPTETKATTTVPDRSGLATNQP) the composition is skewed to polar residues. The span at 401 to 412 (DVHDSSEERVTR) shows a compositional bias: basic and acidic residues.

The protein belongs to the protein kinase superfamily. CK1 Ser/Thr protein kinase family. Casein kinase I subfamily.

The protein localises to the cytoplasm. The catalysed reaction is L-seryl-[protein] + ATP = O-phospho-L-seryl-[protein] + ADP + H(+). It carries out the reaction L-threonyl-[protein] + ATP = O-phospho-L-threonyl-[protein] + ADP + H(+). In terms of biological role, casein kinases are operationally defined by their preferential utilization of acidic proteins such as caseins as substrates. The polypeptide is Casein kinase I homolog 1 (cki1) (Schizosaccharomyces pombe (strain 972 / ATCC 24843) (Fission yeast)).